The primary structure comprises 468 residues: Uronate isomerase (468 aa).

This sequence belongs to the metallo-dependent hydrolases superfamily. Uronate isomerase family.

It carries out the reaction D-glucuronate = D-fructuronate. The enzyme catalyses aldehydo-D-galacturonate = keto-D-tagaturonate. Its pathway is carbohydrate metabolism; pentose and glucuronate interconversion. This is Uronate isomerase from Lachnospira eligens (strain ATCC 27750 / DSM 3376 / VPI C15-48 / C15-B4) (Eubacterium eligens).